Reading from the N-terminus, the 582-residue chain is Semenogelin-2 (582 aa).

The signal sequence occupies residues 1 to 23 (MKSIILFVLSLLLILEKQAAVMG). Residues 24 to 59 (QKGGSKGQLPSGSSQFPHGQKGQHYFGQKDQQHTKS) form a disordered region. Positions 31 to 40 (QLPSGSSQFP) are enriched in polar residues. Tandem repeats lie at residues 70–129 (HVDI…IVIH), 141–200 (NPSQ…QTEE), and 201–260 (LVVN…QDEL). Residues 70–559 (HVDINDHDWT…SSESHNIVIT (490 aa)) are repeat-rich region. Disordered stretches follow at residues 132–160 (GGQAHHGTQNPSQDQGNSPSGKGLSSQCS), 173–194 (KEQASASGAQKGRTQGGSQSSY), 228–248 (EEHSSKLQTSLHPAHQDRLQH), and 269–582 (QTKN…PIST). Polar residues-rich tracts occupy residues 137–160 (HGTQNPSQDQGNSPSGKGLSSQCS) and 174–194 (EQASASGAQKGRTQGGSQSSY). The 4 X 60 AA tandem repeats, type I stretch occupies residues 261 to 500 (LVYNKNQHQT…QSSISFQIEK (240 aa)). N272 carries an N-linked (GlcNAc...) asparagine glycan. The span at 292–310 (RTEERQLHHGEKSVQKDVS) shows a compositional bias: basic and acidic residues. The segment covering 325–334 (KSQNQVTIHS) has biased composition (polar residues). A compositionally biased stretch (basic and acidic residues) spans 335–345 (QDQEHGHKENK). Over residues 372–397 (GSISIQTEEQIHGKSQNQVRIPSQAQ) the composition is skewed to polar residues. The span at 413–426 (TEERRLNSGEKDVQ) shows a compositional bias: basic and acidic residues. Residues 445-455 (KSQNQVTIPSQ) are compositionally biased toward polar residues. Basic and acidic residues predominate over residues 456-465 (DQEHGHKENK). Polar residues-rich tracts occupy residues 482–496 (GKSTQKDVSQSSISF) and 506–532 (SQIQTPNPNQDQWSGQNAKGKSGQSAD). Residues 501-559 (LVEGKSQIQTPNPNQDQWSGQNAKGKSGQSADSKQDLLSHEQKGRYKQESSESHNIVIT) form a 3-2 repeat. Composition is skewed to basic and acidic residues over residues 533-552 (SKQDLLSHEQKGRYKQESSE) and 559-582 (TEHEVAQDDHLTQQYNEDRNPIST).

Belongs to the semenogelin family. In terms of assembly, interacts with SERPINA5. Post-translationally, semenogelin-2 is thought to form both the 71 kDa polypeptide and, in its glycosylated form, the 76 kDa polypeptide. Seminal vesicles, and to a much lesser extent, epididymis.

It localises to the secreted. Its function is as follows. Participates in the formation of a gel matrix (sperm coagulum) entrapping the accessory gland secretions and ejaculated spermatozoa. This Homo sapiens (Human) protein is Semenogelin-2 (SEMG2).